The chain runs to 1007 residues: Exportin-7 (1007 aa).

The protein belongs to the exportin family.

The protein localises to the nucleus. It is found in the cytoplasm. Its subcellular location is the nuclear pore complex. In terms of biological role, mediates the nuclear export of proteins (cargos) with broad substrate specificity. The polypeptide is Exportin-7 (xpo7) (Dictyostelium discoideum (Social amoeba)).